The chain runs to 89 residues: UPF0223 protein Bcer98_2663 (89 aa).

Belongs to the UPF0223 family.

This is UPF0223 protein Bcer98_2663 from Bacillus cytotoxicus (strain DSM 22905 / CIP 110041 / 391-98 / NVH 391-98).